The following is a 596-amino-acid chain: UvrABC system protein C (596 aa).

Residues 14-91 (QQPGCYLMKD…IKKYDPRYNV (78 aa)) enclose the GIY-YIG domain. Residues 196–231 (KDIRKNLAGEMQKASEALNFERAKEIRDTIQHIDAT) enclose the UVR domain.

This sequence belongs to the UvrC family. Interacts with UvrB in an incision complex.

The protein resides in the cytoplasm. Its function is as follows. The UvrABC repair system catalyzes the recognition and processing of DNA lesions. UvrC both incises the 5' and 3' sides of the lesion. The N-terminal half is responsible for the 3' incision and the C-terminal half is responsible for the 5' incision. This is UvrABC system protein C from Oceanobacillus iheyensis (strain DSM 14371 / CIP 107618 / JCM 11309 / KCTC 3954 / HTE831).